The following is a 481-amino-acid chain: 3-ketoacyl-CoA synthase 8 (481 aa).

The next 2 helical transmembrane spans lie at 4 to 24 (LKMV…AMKG) and 44 to 64 (LQTI…YMLT). The 298-residue stretch at 61 to 358 (YMLTRPKPVY…FFITFVKKKY (298 aa)) folds into the FAE domain. Active-site residues include Cys213, His292, His376, His380, His409, and Asn413.

It belongs to the thiolase-like superfamily. Chalcone/stilbene synthases family. In terms of tissue distribution, expressed in leaves and seedlings.

The protein resides in the endoplasmic reticulum membrane. It catalyses the reaction a very-long-chain acyl-CoA + malonyl-CoA + H(+) = a very-long-chain 3-oxoacyl-CoA + CO2 + CoA. The protein operates within lipid metabolism; fatty acid biosynthesis. The polypeptide is 3-ketoacyl-CoA synthase 8 (Arabidopsis thaliana (Mouse-ear cress)).